The primary structure comprises 121 residues: Neuromedin-B (121 aa).

The first 24 residues, 1 to 24 (MARRAGGARMFGSLLLFALLAAGV), serve as a signal peptide directing secretion. The residue at position 56 (Met-56) is a Methionine amide. Positions 60 to 121 (SLEPSSPSPL…RRLLVQILQK (62 aa)) are excised as a propeptide.

Belongs to the bombesin/neuromedin-B/ranatensin family.

It localises to the secreted. It is found in the cell projection. Its subcellular location is the neuron projection. Stimulates smooth muscle contraction. Induces sighing by acting directly on the pre-Botzinger complex, a cluster of several thousand neurons in the ventrolateral medulla responsible for inspiration during respiratory activity. Contributes to the induction of sneezing following exposure to chemical irritants or allergens which causes release of NMB by nasal sensory neurons and activation of NMBR-expressing neurons in the sneeze-evoking region of the brainstem. These in turn activate neurons of the caudal ventral respiratory group, giving rise to the sneezing response. Contributes to induction of acute itch, possibly through activation of the NMBR receptor on dorsal root ganglion neurons. Increases expression of NMBR and steroidogenic mediators STAR, CYP11A1 and HSD3B1 in Leydig cells, induces secretion of testosterone by Leydig cells and also promotes Leydig cell proliferation. Plays a role in the innate immune response to influenza A virus infection by enhancing interferon alpha expression and reducing expression of IL6. Plays a role in CSF1-induced proliferation of osteoclast precursors by contributing to the positive regulation of the expression of the CSF1 receptor CSF1R. The sequence is that of Neuromedin-B (NMB) from Homo sapiens (Human).